Here is a 335-residue protein sequence, read N- to C-terminus: MKKIAIDAMGGDNAPQAIIEGVNRALASFKDIEIQLYGDQEKIKHYLESEERVTIIHTDEKIDSDDEPAKAIRRKKNASMVLAAKAVKEGQADAVLSAGNTGALLAAGLFVVGRIKGVDRPGLMSTLPTTNQKGFDMLDLGANAENTASHLHQYAILGSFYAKNVRGIAKPRVGLLNNGTEETKGDPLRKETYALLSQDPNIHFIGNVEARDLMSGVADVVVADGFTGNAVLKSIEGTALSIMKQLKSSIKGGGFKAKLGALLLKESLSDMKHSLDYSGAGGAVLFGLKAPVVKSHGSSDANSIYYTIKQVRTMLETNVVGQLSEAFSKETISND.

Belongs to the PlsX family. In terms of assembly, homodimer. Probably interacts with PlsY.

It is found in the cytoplasm. It carries out the reaction a fatty acyl-[ACP] + phosphate = an acyl phosphate + holo-[ACP]. It functions in the pathway lipid metabolism; phospholipid metabolism. Functionally, catalyzes the reversible formation of acyl-phosphate (acyl-PO(4)) from acyl-[acyl-carrier-protein] (acyl-ACP). This enzyme utilizes acyl-ACP as fatty acyl donor, but not acyl-CoA. The chain is Phosphate acyltransferase from Streptococcus uberis (strain ATCC BAA-854 / 0140J).